We begin with the raw amino-acid sequence, 211 residues long: Phosphoribosyl-dephospho-CoA transferase (211 aa).

Active-site residues include Asp-136 and Asp-138.

It belongs to the MdcG family.

It carries out the reaction apo-[malonate decarboxylase ACP] + 2'-(5''-triphospho-alpha-D-ribosyl)-3'-dephospho-CoA = holo-[malonate decarboxylase ACP] + diphosphate. Functionally, transfers 2'-(5-triphosphoribosyl)-3'-dephosphocoenzyme-A to the apo-[acyl-carrier-protein] of the malonate decarboxylase to yield holo-[acyl-carrier-protein]. This is Phosphoribosyl-dephospho-CoA transferase from Pseudomonas syringae pv. tomato (strain ATCC BAA-871 / DC3000).